The primary structure comprises 64 residues: Large ribosomal subunit protein bL35 (64 aa).

Composition is skewed to basic residues over residues 1 to 15 (MPKA…KRFR) and 23 to 42 (VRQK…KRTR). Residues 1–45 (MPKAKTHSGASKRFRTTGSGKVVRQKANRRHLLEHKPTKRTRRLD) are disordered.

This sequence belongs to the bacterial ribosomal protein bL35 family.

The sequence is that of Large ribosomal subunit protein bL35 from Mycolicibacterium vanbaalenii (strain DSM 7251 / JCM 13017 / BCRC 16820 / KCTC 9966 / NRRL B-24157 / PYR-1) (Mycobacterium vanbaalenii).